Here is a 210-residue protein sequence, read N- to C-terminus: dITP/XTP pyrophosphatase (210 aa).

Residue 19-24 participates in substrate binding; that stretch reads SNNPGK. 2 residues coordinate Mg(2+): aspartate 51 and aspartate 80. Aspartate 80 functions as the Proton acceptor in the catalytic mechanism. Substrate contacts are provided by residues serine 81, 166 to 169, lysine 189, and 194 to 195; these read FGYD and HR.

It belongs to the HAM1 NTPase family. In terms of assembly, homodimer. The cofactor is Mg(2+).

The enzyme catalyses XTP + H2O = XMP + diphosphate + H(+). The catalysed reaction is dITP + H2O = dIMP + diphosphate + H(+). It carries out the reaction ITP + H2O = IMP + diphosphate + H(+). Functionally, pyrophosphatase that catalyzes the hydrolysis of nucleoside triphosphates to their monophosphate derivatives, with a high preference for the non-canonical purine nucleotides XTP (xanthosine triphosphate), dITP (deoxyinosine triphosphate) and ITP. Seems to function as a house-cleaning enzyme that removes non-canonical purine nucleotides from the nucleotide pool, thus preventing their incorporation into DNA/RNA and avoiding chromosomal lesions. The polypeptide is dITP/XTP pyrophosphatase (Burkholderia mallei (strain ATCC 23344)).